The following is a 274-amino-acid chain: Diaminopimelate epimerase (274 aa).

Residues asparagine 11, glutamine 44, and asparagine 64 each contribute to the substrate site. Cysteine 73 (proton donor) is an active-site residue. Substrate-binding positions include 74–75 (GN), asparagine 157, asparagine 190, and 208–209 (ER). Cysteine 217 serves as the catalytic Proton acceptor. Substrate is bound at residue 218–219 (GS).

It belongs to the diaminopimelate epimerase family. As to quaternary structure, homodimer.

It localises to the cytoplasm. The catalysed reaction is (2S,6S)-2,6-diaminopimelate = meso-2,6-diaminopimelate. Its pathway is amino-acid biosynthesis; L-lysine biosynthesis via DAP pathway; DL-2,6-diaminopimelate from LL-2,6-diaminopimelate: step 1/1. Its function is as follows. Catalyzes the stereoinversion of LL-2,6-diaminopimelate (L,L-DAP) to meso-diaminopimelate (meso-DAP), a precursor of L-lysine and an essential component of the bacterial peptidoglycan. The protein is Diaminopimelate epimerase of Enterobacter sp. (strain 638).